Reading from the N-terminus, the 204-residue chain is Glycerol-3-phosphate acyltransferase (204 aa).

5 helical membrane passes run 8 to 28 (ILIF…CYIF), 53 to 73 (VPAA…VVIA), 81 to 101 (FITA…IFFG), 116 to 136 (FGFS…VAII), and 155 to 175 (VIFT…IIIL).

It belongs to the PlsY family. As to quaternary structure, probably interacts with PlsX.

It is found in the cell inner membrane. It catalyses the reaction an acyl phosphate + sn-glycerol 3-phosphate = a 1-acyl-sn-glycero-3-phosphate + phosphate. The protein operates within lipid metabolism; phospholipid metabolism. In terms of biological role, catalyzes the transfer of an acyl group from acyl-phosphate (acyl-PO(4)) to glycerol-3-phosphate (G3P) to form lysophosphatidic acid (LPA). This enzyme utilizes acyl-phosphate as fatty acyl donor, but not acyl-CoA or acyl-ACP. The sequence is that of Glycerol-3-phosphate acyltransferase from Francisella tularensis subsp. tularensis (strain FSC 198).